The primary structure comprises 252 residues: Ribosomal RNA small subunit methyltransferase J (252 aa).

S-adenosyl-L-methionine is bound by residues 101–102 (RD), 117–118 (ER), 153–154 (SS), and Asp171.

Belongs to the methyltransferase superfamily. RsmJ family.

It is found in the cytoplasm. It carries out the reaction guanosine(1516) in 16S rRNA + S-adenosyl-L-methionine = N(2)-methylguanosine(1516) in 16S rRNA + S-adenosyl-L-homocysteine + H(+). Specifically methylates the guanosine in position 1516 of 16S rRNA. In Salmonella dublin (strain CT_02021853), this protein is Ribosomal RNA small subunit methyltransferase J.